We begin with the raw amino-acid sequence, 181 residues long: Putative D-tyrosyl-tRNA(Tyr) deacylase 2 (181 aa).

This sequence belongs to the DTD family. Highly divergent. Homodimer.

The protein localises to the cytoplasm. Functionally, may hydrolyze D-tyrosyl-tRNA(Tyr) into D-tyrosine and free tRNA(Tyr). Could be a defense mechanism against a harmful effect of D-tyrosine. The protein is Putative D-tyrosyl-tRNA(Tyr) deacylase 2 of Leishmania major.